The chain runs to 306 residues: Porphobilinogen deaminase (306 aa).

Cys239 carries the S-(dipyrrolylmethanemethyl)cysteine modification.

Belongs to the HMBS family. Monomer. Dipyrromethane is required as a cofactor.

It catalyses the reaction 4 porphobilinogen + H2O = hydroxymethylbilane + 4 NH4(+). Its pathway is porphyrin-containing compound metabolism; protoporphyrin-IX biosynthesis; coproporphyrinogen-III from 5-aminolevulinate: step 2/4. In terms of biological role, tetrapolymerization of the monopyrrole PBG into the hydroxymethylbilane pre-uroporphyrinogen in several discrete steps. In Helicobacter pylori (strain Shi470), this protein is Porphobilinogen deaminase.